The following is a 113-amino-acid chain: MFSRVIFCTFLILPLLAAATAIPRTNPPAPTCTTGSLQCCNSVQAASNPVVGLLAGLLGIVLGPITGQVGLTCSPITVIGVGGTSCSAQTVCCNGNSFNGLIVVGCSPVNISL.

Residues 1–21 form the signal peptide; that stretch reads MFSRVIFCTFLILPLLAAATA. 4 disulfides stabilise this stretch: Cys-32-Cys-92, Cys-39-Cys-86, Cys-40-Cys-73, and Cys-93-Cys-106. N-linked (GlcNAc...) asparagine glycosylation is present at Asn-110.

The protein belongs to the fungal hydrophobin family. In terms of assembly, self-assembles to form functional amyloid fibrils called rodlets. Self-assembly into fibrillar rodlets occurs spontaneously at hydrophobic:hydrophilic interfaces and the rodlets further associate laterally to form amphipathic monolayers. As to expression, expressionn is switched off in the fruiting bodies but abundantly expressed in the vegetative mycelium of both monokaryon and dikaryon.

The protein resides in the secreted. It is found in the cell wall. Functionally, aerial growth, conidiation, and dispersal of filamentous fungi in the environment rely upon a capability of their secreting small amphipathic proteins called hydrophobins (HPBs) with low sequence identity. Class I can self-assemble into an outermost layer of rodlet bundles on aerial cell surfaces, conferring cellular hydrophobicity that supports fungal growth, development and dispersal; whereas Class II form highly ordered films at water-air interfaces through intermolecular interactions but contribute nothing to the rodlet structure. POH3 is a class I hydrophobin that causes a large drop in the water-surface tension, enabling hyphae to breach the interface and grow into the air, in both the primary and the secondary mycelium. In the latter mycelium POH3 maight also play a role in the emergence of fruiting bodies. Secreted POH3 could also play a role in facilitating lignin degradation. This chain is Class I hydrophobin POH3, found in Pleurotus ostreatus (Oyster mushroom).